The sequence spans 165 residues: MLMPKKNRIAIYELLFKEGVMVAKKDVHMPKHPELADKNVPNLHVMKAMQSLKSRGYVKEQFAWRHFYWYLTNEGIQYLRDYLHLPPEIVPATLRRSRPETGRPRPKGLEGERPARLTRGEADRDTYRRSAVPPGADKKAEAGAGSATEFQFRGGFGRGRGQPPQ.

Tyr-12 is subject to Phosphotyrosine. The tract at residues 92–165 is disordered; the sequence is ATLRRSRPET…FGRGRGQPPQ (74 aa). A compositionally biased stretch (basic and acidic residues) spans 97-128; sequence SRPETGRPRPKGLEGERPARLTRGEADRDTYR. Glycyl lysine isopeptide (Lys-Gly) (interchain with G-Cter in ubiquitin) cross-links involve residues Lys-138 and Lys-139. Ser-146 carries the phosphoserine modification. The residue at position 153 (Arg-153) is an Omega-N-methylarginine. Positions 154-165 are enriched in gly residues; it reads GGFGRGRGQPPQ. 2 positions are modified to symmetric dimethylarginine: Arg-158 and Arg-160.

This sequence belongs to the eukaryotic ribosomal protein eS10 family. As to quaternary structure, component of the small ribosomal subunit. The methylated form interacts with NPM1. Post-translationally, methylated by PRMT5. Methylation is necessary for its interaction with NPS1, its localization in the granular component (GC) region of the nucleolus, for the proper assembly of ribosomes, protein synthesis and optimal cell proliferation. Monoubiquitinated by ZNF598 when a ribosome has stalled during translation of poly(A) sequences, leading to preclude synthesis of a long poly-lysine tail and initiate the ribosome quality control (RQC) pathway to degrade the potentially detrimental aberrant nascent polypeptide. Deubiquitinated by OTUD3 and USP21, antagonizing ZNF598 activity. Deubiquitinated by OTUD1, antagonizing ZNF598 activity and stimulating formation of polysomes: deubiquitination by OTUD1 promotes stability and translation of a subset mRNAs with a high abundance of rare codons can limit the translation rate. Deubiquitinated by USP10.

Its subcellular location is the cytoplasm. It is found in the nucleus. The protein resides in the nucleolus. Component of the 40S ribosomal subunit. The ribosome is a large ribonucleoprotein complex responsible for the synthesis of proteins in the cell. The polypeptide is Small ribosomal subunit protein eS10 (RPS10) (Oryctolagus cuniculus (Rabbit)).